A 132-amino-acid chain; its full sequence is uncharacterized protein (132 aa).

A helical transmembrane segment spans residues 66-86 (LPPMLLVLAALFVKGLIPLVL).

The protein resides in the membrane. This is an uncharacterized protein from Saccharomyces cerevisiae (strain ATCC 204508 / S288c) (Baker's yeast).